A 76-amino-acid polypeptide reads, in one-letter code: Sec-independent protein translocase protein TatA (76 aa).

The chain crosses the membrane as a helical span at residues 1–21 (MGGLSIWHWLIVLLIVALVFG). Positions 40 to 76 (KDGMKEGETPADAQQLPRTGTVDVNAKETTRSDSNKA) are disordered. Residues 64–76 (NAKETTRSDSNKA) are compositionally biased toward basic and acidic residues.

The protein belongs to the TatA/E family. The Tat system comprises two distinct complexes: a TatABC complex, containing multiple copies of TatA, TatB and TatC subunits, and a separate TatA complex, containing only TatA subunits. Substrates initially bind to the TatABC complex, which probably triggers association of the separate TatA complex to form the active translocon.

The protein resides in the cell inner membrane. Part of the twin-arginine translocation (Tat) system that transports large folded proteins containing a characteristic twin-arginine motif in their signal peptide across membranes. TatA could form the protein-conducting channel of the Tat system. The sequence is that of Sec-independent protein translocase protein TatA from Burkholderia ambifaria (strain MC40-6).